Consider the following 171-residue polypeptide: Auxin-responsive protein IAA33 (171 aa).

Polar residues-rich tracts occupy residues 1–11 and 19–32; these read MNSFEPQSQDS and DNSTTQQPRDTTTP. The segment at 1 to 51 is disordered; it reads MNSFEPQSQDSLQRRFHQDNSTTQQPRDTTTPFIPKPASKNHNNSNSSSGA. Residues 40-49 show a composition bias toward low complexity; the sequence is KNHNNSNSSS. Residues 72–162 form the PB1 domain; the sequence is VPPVTVVLEG…KRIRILPVKG (91 aa).

Belongs to the Aux/IAA family. In terms of assembly, homodimers and heterodimers.

Its subcellular location is the nucleus. Aux/IAA proteins are short-lived transcriptional factors that function as repressors of early auxin response genes at low auxin concentrations. Repression is thought to result from the interaction with auxin response factors (ARFs), proteins that bind to the auxin-responsive promoter element (AuxRE). Formation of heterodimers with ARF proteins may alter their ability to modulate early auxin response genes expression. The chain is Auxin-responsive protein IAA33 (IAA33) from Arabidopsis thaliana (Mouse-ear cress).